We begin with the raw amino-acid sequence, 134 residues long: MDTSYPREDPRAPSSRKADAAAHTALSMGTPGPTPRDHMLWSVFSTMYLNLCCLGFLALVHSVKARDQKMAGNLEAARQYGSKAKCYNILAAMWTLVPPLLLLGLVVTGALHLSKLAKDSAAFFSTKFDEEDYN.

The span at 1–20 (MDTSYPREDPRAPSSRKADA) shows a compositional bias: basic and acidic residues. A disordered region spans residues 1–31 (MDTSYPREDPRAPSSRKADAAAHTALSMGTP). At 1–39 (MDTSYPREDPRAPSSRKADAAAHTALSMGTPGPTPRDHM) the chain is on the extracellular side. The helical transmembrane segment at 40 to 60 (LWSVFSTMYLNLCCLGFLALV) threads the bilayer. Residues Cys-52, Cys-53, and Cys-86 are each lipidated (S-palmitoyl cysteine). Over 61 to 88 (HSVKARDQKMAGNLEAARQYGSKAKCYN) the chain is Cytoplasmic. Residues 89-109 (ILAAMWTLVPPLLLLGLVVTG) traverse the membrane as a helical segment. Topologically, residues 110–134 (ALHLSKLAKDSAAFFSTKFDEEDYN) are extracellular.

It belongs to the CD225/Dispanin family. In terms of assembly, interacts with FKBP11. Palmitoylated. Detected in embryonic bone (at protein level). Highly expressed in osteoblasts of adults and embryos. Expressed in primitive hemopoietic cells.

The protein localises to the cell membrane. Functionally, required for normal bone mineralization. This chain is Interferon-induced transmembrane protein 5 (Ifitm5), found in Mus musculus (Mouse).